The following is a 394-amino-acid chain: Seipin (394 aa).

Residues 1 to 27 (MVNDPPVPALLWAQEMGHVMAGRARKL) lie on the Cytoplasmic side of the membrane. A helical transmembrane segment spans residues 28 to 48 (LLQFGVFFCTILLLLWVSVFL). Residues 49–242 (YGSFYYSYMP…TCAFVGVASN (194 aa)) lie on the Lumenal side of the membrane. 2 N-linked (GlcNAc...) asparagine glycosylation sites follow: asparagine 88 and asparagine 242. The helical transmembrane segment at 243–263 (FTFLSVIVLFSYMQWVWGGIW) threads the bilayer. The Cytoplasmic portion of the chain corresponds to 264–394 (PRQRLSLQVN…VRQRPICSSS (131 aa)). Positions 281 to 394 (RKDIQRKVSA…VRQRPICSSS (114 aa)) are disordered. Serine 289 is subject to Phosphoserine. Residues 292-303 (QPGPQGQEESPQ) are compositionally biased toward low complexity. Serine 346 and serine 351 each carry phosphoserine.

Belongs to the seipin family. In terms of assembly, undecamer (an oligomer having eleven subunits). Oligomerization is important for its function in lipid droplet formation. Interacts with LDAF1 to form an oligomeric complex. Interacts with RAB18. Interacts with ZFYVE1 in a RAB18-dependent manner.

It localises to the endoplasmic reticulum membrane. Its subcellular location is the lipid droplet. Functionally, plays a crucial role in the formation of lipid droplets (LDs) which are storage organelles at the center of lipid and energy homeostasis. In association with LDAF1, defines the sites of LD formation in the ER. Also required for growth and maturation of small nascent LDs into larger mature LDs. Mediates the formation and/or stabilization of endoplasmic reticulum-lipid droplets (ER-LD) contacts, facilitating protein and lipid delivery from the ER into growing LDs. Regulates the maturation of ZFYVE1-positive nascent LDs and the function of the RAB18-ZFYVE1 complex in mediating the formation of ER-LD contacts. Binds anionic phospholipids including phosphatidic acid. Plays an important role in the differentiation and development of adipocytes. This is Seipin from Bos taurus (Bovine).